The chain runs to 306 residues: Recombination-associated protein RdgC (306 aa).

Belongs to the RdgC family.

It localises to the cytoplasm. The protein resides in the nucleoid. Its function is as follows. May be involved in recombination. This Pseudomonas syringae pv. tomato (strain ATCC BAA-871 / DC3000) protein is Recombination-associated protein RdgC.